The primary structure comprises 148 residues: Ribosomal RNA large subunit methyltransferase H (148 aa).

Residues Leu-62, Gly-94, and 113–118 (LSLLTL) each bind S-adenosyl-L-methionine.

The protein belongs to the RNA methyltransferase RlmH family. As to quaternary structure, homodimer.

Its subcellular location is the cytoplasm. It carries out the reaction pseudouridine(1915) in 23S rRNA + S-adenosyl-L-methionine = N(3)-methylpseudouridine(1915) in 23S rRNA + S-adenosyl-L-homocysteine + H(+). Functionally, specifically methylates the pseudouridine at position 1915 (m3Psi1915) in 23S rRNA. The chain is Ribosomal RNA large subunit methyltransferase H from Deinococcus geothermalis (strain DSM 11300 / CIP 105573 / AG-3a).